A 339-amino-acid chain; its full sequence is Phenylalanine--tRNA ligase alpha subunit (339 aa).

Mg(2+) is bound at residue E254.

Belongs to the class-II aminoacyl-tRNA synthetase family. Phe-tRNA synthetase alpha subunit type 1 subfamily. In terms of assembly, tetramer of two alpha and two beta subunits. The cofactor is Mg(2+).

Its subcellular location is the cytoplasm. It carries out the reaction tRNA(Phe) + L-phenylalanine + ATP = L-phenylalanyl-tRNA(Phe) + AMP + diphosphate + H(+). This Clostridium botulinum (strain Alaska E43 / Type E3) protein is Phenylalanine--tRNA ligase alpha subunit.